Consider the following 692-residue polypeptide: Meiotic sister-chromatid recombination protein 6, mitochondrial (692 aa).

Residues 1-30 (MLSHNALRAFDCSKVIISRRCLTSSTSIYQ) constitute a mitochondrion transit peptide.

It is found in the mitochondrion. May be involved in the control of meiotic sister-chromatid recombination. The chain is Meiotic sister-chromatid recombination protein 6, mitochondrial (MSC6) from Saccharomyces cerevisiae (strain ATCC 204508 / S288c) (Baker's yeast).